We begin with the raw amino-acid sequence, 332 residues long: Large ribosomal subunit protein mL44 (332 aa).

A mitochondrion-targeting transit peptide spans 1 to 30 (MASGLVRLLQQGHRCLLAPVAPKLVPPVRG). Residues 86 to 228 (DLLKTAFVNS…LITQMTGKEL (143 aa)) form the RNase III domain. One can recognise a DRBM domain in the interval 236-306 (NPMGLLVEEL…ARVALRKLYG (71 aa)).

This sequence belongs to the ribonuclease III family. Mitochondrion-specific ribosomal protein mL44 subfamily. Component of the mitochondrial large ribosomal subunit (mt-LSU). Mature mammalian 55S mitochondrial ribosomes consist of a small (28S) and a large (39S) subunit. The 28S small subunit contains a 12S ribosomal RNA (12S mt-rRNA) and 30 different proteins. The 39S large subunit contains a 16S rRNA (16S mt-rRNA), a copy of mitochondrial valine transfer RNA (mt-tRNA(Val)), which plays an integral structural role, and 52 different proteins.

Its subcellular location is the mitochondrion. In terms of biological role, component of the 39S subunit of mitochondrial ribosome. May have a function in the assembly/stability of nascent mitochondrial polypeptides exiting the ribosome. The chain is Large ribosomal subunit protein mL44 (MRPL44) from Homo sapiens (Human).